A 556-amino-acid chain; its full sequence is Membrane protein insertase YidC (556 aa).

The helical transmembrane segment at 5–25 (TLTAIVLSFVLLTAFQFYMAW) threads the bilayer. Positions 36 to 74 (QVQSGESSAPAPLASTAPVADALPPPVEGMAGSAPQQAM) are disordered. Residues 42-55 (SSAPAPLASTAPVA) show a composition bias toward low complexity. 4 helical membrane passes run 370 to 390 (NYGVAIILLTLAIKLLFFPLA), 441 to 461 (LPILVQIPVFFALYKVLFLSV), 468 to 488 (FMLWIPDLSAMDPFYVLPLLM), and 510 to 530 (IMMFLPVIFTVMFLSFPSGLV).

This sequence belongs to the OXA1/ALB3/YidC family. Type 1 subfamily. As to quaternary structure, interacts with the Sec translocase complex via SecD. Specifically interacts with transmembrane segments of nascent integral membrane proteins during membrane integration.

The protein localises to the cell inner membrane. In terms of biological role, required for the insertion and/or proper folding and/or complex formation of integral membrane proteins into the membrane. Involved in integration of membrane proteins that insert both dependently and independently of the Sec translocase complex, as well as at least some lipoproteins. Aids folding of multispanning membrane proteins. This is Membrane protein insertase YidC from Magnetococcus marinus (strain ATCC BAA-1437 / JCM 17883 / MC-1).